A 465-amino-acid chain; its full sequence is Serine carboxypeptidase 24 (465 aa).

The signal sequence occupies residues 1-24 (MARTHFIFLLLVALLSTTFPSSSS). Asn-54, Asn-105, and Asn-139 each carry an N-linked (GlcNAc...) asparagine glycan. Intrachain disulfides connect Cys-88/Cys-349, Cys-249/Cys-260, and Cys-285/Cys-317. Ser-181 is an active-site residue. N-linked (GlcNAc...) asparagine glycans are attached at residues Asn-250, Asn-293, and Asn-338. A propeptide spans 287–316 (AAQQKKNTTGFFVRMKNTLLRRRLVSGYDP) (linker peptide). Catalysis depends on residues Asp-386 and His-438.

The protein belongs to the peptidase S10 family. Heterodimer. In terms of processing, N-glycosylated. Expressed in shoots, leaves, cauline leaves, siliques and flowers. Expressed a low levels in roots and stems.

The protein localises to the secreted. It is found in the extracellular space. The catalysed reaction is Preferential release of a C-terminal arginine or lysine residue.. With respect to regulation, completely inhibited by phenylmethylsulfonyl fluoride (PMSF) and partially by leupeptin. Its function is as follows. Active serine carboxypeptidase with broad substrate preference, including basic and hydrophilic groups. Processes a protein involved in an early event in the brassinosteroid signaling pathway. This chain is Serine carboxypeptidase 24 (SCPL24), found in Arabidopsis thaliana (Mouse-ear cress).